We begin with the raw amino-acid sequence, 124 residues long: uncharacterized protein (124 aa).

An N-terminal signal peptide occupies residues 1–23 (MHKLLKLLSITLIGLSVATGVQA).

It belongs to the cytochrome b562 family.

This is an uncharacterized protein from Pasteurella multocida (strain Pm70).